The primary structure comprises 96 residues: uncharacterized protein (96 aa).

Asn-4 carries N-linked (GlcNAc...) asparagine glycosylation. Residues 59–81 (VFFTIFDTIITIIVRSGIPFPLL) form a helical membrane-spanning segment.

The protein resides in the membrane. This is an uncharacterized protein from Saccharomyces cerevisiae (strain ATCC 204508 / S288c) (Baker's yeast).